We begin with the raw amino-acid sequence, 453 residues long: Bifunctional protein GlmU (453 aa).

Residues 1–231 are pyrophosphorylase; the sequence is MERTCLAVIL…EIEMTGCNNR (231 aa). UDP-N-acetyl-alpha-D-glucosamine contacts are provided by residues 10-13, lysine 24, glutamine 77, 82-83, 105-107, glycine 143, glutamate 157, asparagine 172, and asparagine 229; these read LAAG, GT, and YGD. Aspartate 107 contributes to the Mg(2+) binding site. Position 229 (asparagine 229) interacts with Mg(2+). Positions 232–252 are linker; sequence AELAVIERFWQERRRREMMLA. Residues 253-453 are N-acetyltransferase; that stretch reads GVTMIAPETV…AIKAAKRAKA (201 aa). UDP-N-acetyl-alpha-D-glucosamine contacts are provided by arginine 318 and lysine 336. The Proton acceptor role is filled by histidine 348. Positions 351 and 362 each coordinate UDP-N-acetyl-alpha-D-glucosamine. Acetyl-CoA is bound by residues alanine 365, 371 to 372, serine 390, serine 408, and arginine 425; that span reads NY.

This sequence in the N-terminal section; belongs to the N-acetylglucosamine-1-phosphate uridyltransferase family. The protein in the C-terminal section; belongs to the transferase hexapeptide repeat family. In terms of assembly, homotrimer. The cofactor is Mg(2+).

It localises to the cytoplasm. It carries out the reaction alpha-D-glucosamine 1-phosphate + acetyl-CoA = N-acetyl-alpha-D-glucosamine 1-phosphate + CoA + H(+). The catalysed reaction is N-acetyl-alpha-D-glucosamine 1-phosphate + UTP + H(+) = UDP-N-acetyl-alpha-D-glucosamine + diphosphate. It functions in the pathway nucleotide-sugar biosynthesis; UDP-N-acetyl-alpha-D-glucosamine biosynthesis; N-acetyl-alpha-D-glucosamine 1-phosphate from alpha-D-glucosamine 6-phosphate (route II): step 2/2. It participates in nucleotide-sugar biosynthesis; UDP-N-acetyl-alpha-D-glucosamine biosynthesis; UDP-N-acetyl-alpha-D-glucosamine from N-acetyl-alpha-D-glucosamine 1-phosphate: step 1/1. Its pathway is bacterial outer membrane biogenesis; LPS lipid A biosynthesis. In terms of biological role, catalyzes the last two sequential reactions in the de novo biosynthetic pathway for UDP-N-acetylglucosamine (UDP-GlcNAc). The C-terminal domain catalyzes the transfer of acetyl group from acetyl coenzyme A to glucosamine-1-phosphate (GlcN-1-P) to produce N-acetylglucosamine-1-phosphate (GlcNAc-1-P), which is converted into UDP-GlcNAc by the transfer of uridine 5-monophosphate (from uridine 5-triphosphate), a reaction catalyzed by the N-terminal domain. This chain is Bifunctional protein GlmU, found in Rhizobium etli (strain CIAT 652).